A 356-amino-acid chain; its full sequence is Histidinol-phosphate aminotransferase (356 aa).

The residue at position 211 (K211) is an N6-(pyridoxal phosphate)lysine.

Belongs to the class-II pyridoxal-phosphate-dependent aminotransferase family. Histidinol-phosphate aminotransferase subfamily. As to quaternary structure, homodimer. The cofactor is pyridoxal 5'-phosphate.

The enzyme catalyses L-histidinol phosphate + 2-oxoglutarate = 3-(imidazol-4-yl)-2-oxopropyl phosphate + L-glutamate. It participates in amino-acid biosynthesis; L-histidine biosynthesis; L-histidine from 5-phospho-alpha-D-ribose 1-diphosphate: step 7/9. In Aeromonas hydrophila subsp. hydrophila (strain ATCC 7966 / DSM 30187 / BCRC 13018 / CCUG 14551 / JCM 1027 / KCTC 2358 / NCIMB 9240 / NCTC 8049), this protein is Histidinol-phosphate aminotransferase.